A 148-amino-acid polypeptide reads, in one-letter code: Aspartate carbamoyltransferase regulatory chain (148 aa).

Residues C106, C111, C134, and C137 each coordinate Zn(2+).

Belongs to the PyrI family. Contains catalytic and regulatory chains. The cofactor is Zn(2+).

In terms of biological role, involved in allosteric regulation of aspartate carbamoyltransferase. This Methanococcus maripaludis (strain C6 / ATCC BAA-1332) protein is Aspartate carbamoyltransferase regulatory chain.